We begin with the raw amino-acid sequence, 362 residues long: Peptide chain release factor 1 (362 aa).

N5-methylglutamine is present on Q237.

The protein belongs to the prokaryotic/mitochondrial release factor family. In terms of processing, methylated by PrmC. Methylation increases the termination efficiency of RF1.

The protein resides in the cytoplasm. Peptide chain release factor 1 directs the termination of translation in response to the peptide chain termination codons UAG and UAA. The protein is Peptide chain release factor 1 of Marinomonas sp. (strain MWYL1).